The sequence spans 166 residues: Small ribosomal subunit protein uS5 (166 aa).

Residues 11–74 form the S5 DRBM domain; it reads LIEKLVSVKR…ENAKKNMVSV (64 aa).

The protein belongs to the universal ribosomal protein uS5 family. As to quaternary structure, part of the 30S ribosomal subunit. Contacts proteins S4 and S8.

Functionally, with S4 and S12 plays an important role in translational accuracy. Located at the back of the 30S subunit body where it stabilizes the conformation of the head with respect to the body. The chain is Small ribosomal subunit protein uS5 from Francisella tularensis subsp. holarctica (strain LVS).